Here is a 354-residue protein sequence, read N- to C-terminus: Uroporphyrinogen decarboxylase (354 aa).

Substrate contacts are provided by residues 27 to 31, Asp77, Tyr154, Thr209, and His327; that span reads RQAGR.

The protein belongs to the uroporphyrinogen decarboxylase family. As to quaternary structure, homodimer.

It is found in the cytoplasm. The enzyme catalyses uroporphyrinogen III + 4 H(+) = coproporphyrinogen III + 4 CO2. The protein operates within porphyrin-containing compound metabolism; protoporphyrin-IX biosynthesis; coproporphyrinogen-III from 5-aminolevulinate: step 4/4. Its function is as follows. Catalyzes the decarboxylation of four acetate groups of uroporphyrinogen-III to yield coproporphyrinogen-III. In Escherichia coli (strain 55989 / EAEC), this protein is Uroporphyrinogen decarboxylase.